We begin with the raw amino-acid sequence, 132 residues long: Myelin P2 protein (132 aa).

S2 bears the N-acetylserine mark. (9Z)-octadecenoate is bound at residue R107. R107 provides a ligand contact to hexadecanoate. C118 and C125 are disulfide-bonded. Residue 127-129 participates in (9Z)-octadecenoate binding; sequence RIY. Residue 127-129 coordinates hexadecanoate; the sequence is RIY.

The protein belongs to the calycin superfamily. Fatty-acid binding protein (FABP) family. As to quaternary structure, monomer. As to expression, detected in spinal cord (at protein level).

The protein localises to the cytoplasm. In terms of biological role, may play a role in lipid transport protein in Schwann cells. May bind cholesterol. This Equus caballus (Horse) protein is Myelin P2 protein (PMP2).